A 369-amino-acid chain; its full sequence is Transcription factor GTE6 (369 aa).

Positions 89–198 (KRMQDLMRQF…EKFEEKWAHF (110 aa)) constitute a Bromo domain. Residues 201–263 (KVQEEEKIRE…VERCRKITIE (63 aa)) are a coiled coil. The 82-residue stretch at 250 to 331 (MRKVVERCRK…DALDNAMKKK (82 aa)) folds into the NET domain. Over residues 329–348 (KKKKEEETKTRELSGAQKKE) the composition is skewed to basic and acidic residues. Positions 329-369 (KKKKEEETKTRELSGAQKKEVSKKRNATTKLAERKTKRSRI) are disordered. The Bipartite nuclear localization signal signature appears at 351 to 368 (KKRNATTKLAERKTKRSR).

In terms of tissue distribution, abundantly expressed in flowers. Weakly expressed in roots, leaves and siliques; and undetectable in 5-day-old seedlings. In the basal rosette leaves of 21-day-old plants, it is more abundant in leaves 6 and 7, which possess narrow elliptical laminae, than in leaves 1-4, which have round laminae, suggesting a possible correlation between its expression and the formation of elliptical leaf laminae in mature leaves.

The protein localises to the nucleus. Regulates differences in leaf patterning between juvenile and mature leaves by controlling differences in the development of primordia produced during juvenile and mature phases. Acts by activating transcription of the myb-domain protein AS1, a gene involved in leaf-axis specification. Associates with the promoter and the start of the transcribed region of AS1 and up-regulates expression of AS1 through acetylation of histones H3 and H4. The polypeptide is Transcription factor GTE6 (GTE6) (Arabidopsis thaliana (Mouse-ear cress)).